Reading from the N-terminus, the 488-residue chain is 3-octaprenyl-4-hydroxybenzoate carboxy-lyase (488 aa).

Asparagine 172 provides a ligand contact to Mn(2+). Prenylated FMN contacts are provided by residues 175–177 (IYR), 189–191 (RWL), and 194–195 (RG). Glutamate 238 contributes to the Mn(2+) binding site. The active-site Proton donor is aspartate 287.

This sequence belongs to the UbiD family. As to quaternary structure, homohexamer. Requires prenylated FMN as cofactor. Mn(2+) serves as cofactor.

Its subcellular location is the cell membrane. The enzyme catalyses a 4-hydroxy-3-(all-trans-polyprenyl)benzoate + H(+) = a 2-(all-trans-polyprenyl)phenol + CO2. The protein operates within cofactor biosynthesis; ubiquinone biosynthesis. Functionally, catalyzes the decarboxylation of 3-octaprenyl-4-hydroxy benzoate to 2-octaprenylphenol, an intermediate step in ubiquinone biosynthesis. The protein is 3-octaprenyl-4-hydroxybenzoate carboxy-lyase of Alteromonas mediterranea (strain DSM 17117 / CIP 110805 / LMG 28347 / Deep ecotype).